The chain runs to 167 residues: Mediator of RNA polymerase II transcription subunit 10 (167 aa).

The disordered stretch occupies residues 54-92 (STHTKPHPPPPPPPQPTDPTTAAAPALRDNPDPPLSSIQ). The span at 60–70 (HPPPPPPPQPT) shows a compositional bias: pro residues.

Belongs to the Mediator complex subunit 10 family. In terms of assembly, component of the Mediator complex.

The protein localises to the nucleus. Its function is as follows. Component of the Mediator complex, a coactivator involved in the regulated transcription of nearly all RNA polymerase II-dependent genes. Mediator functions as a bridge to convey information from gene-specific regulatory proteins to the basal RNA polymerase II transcription machinery. Mediator is recruited to promoters by direct interactions with regulatory proteins and serves as a scaffold for the assembly of a functional preinitiation complex with RNA polymerase II and the general transcription factors. The sequence is that of Mediator of RNA polymerase II transcription subunit 10 (nut2) from Aspergillus clavatus (strain ATCC 1007 / CBS 513.65 / DSM 816 / NCTC 3887 / NRRL 1 / QM 1276 / 107).